The following is a 1293-amino-acid chain: DNA repair protein complementing XP-C cells homolog (1293 aa).

5 disordered regions span residues 1–199, 217–239, 255–341, 514–640, and 658–919; these read MSDE…FEDK, ERTRDALSKRNVTATPPRSQAAT, QSVE…NISG, DLIP…SKCL, and LSSK…EPAK. Over residues 18–30 the composition is skewed to basic and acidic residues; it reads DEWKPSKDVKGGE. 3 positions are modified to phosphoserine: serine 31, serine 32, and serine 37. Over residues 31–43 the composition is skewed to acidic residues; the sequence is SSDDDDSDFDELQ. Residues 51–60 show a composition bias toward low complexity; it reads SSGRSSAVAG. Composition is skewed to polar residues over residues 101 to 130 and 226 to 238; these read FPTSPSQQKENTPRASGSKNAKTPNESGAR and RNVTATPPRSQAA. Residues 288 to 301 are compositionally biased toward basic residues; it reads SKTKSTRIKRHTKT. Over residues 313–335 the composition is skewed to acidic residues; it reads DTDDSDFEEVADADLSSDQDDGE. Basic and acidic residues predominate over residues 520-578; that stretch reads LRPDDKNKSQTVESERESEDEKPKKDKKAGKPAEKESSKSTISKEAEKKNNAKKAEAKP. Residues serine 533 and serine 537 each carry the phosphoserine modification. Residues 580–594 show a composition bias toward low complexity; that stretch reads SKSTTKGSETTKSGT. A compositionally biased stretch (basic and acidic residues) spans 598–612; sequence VKKELSLSSKLVEKS. Residues 658–692 are compositionally biased toward low complexity; the sequence is LSSKLVLKSKNQSSFSSNKSDTSFEENPSTSSSSK. The span at 693–711 shows a compositional bias: basic and acidic residues; the sequence is SLKEETAKLSSSKLEDKKV. A compositionally biased stretch (polar residues) spans 720-737; sequence KVQSSLLKRVTTQNISES. Residues 806 to 818 show a composition bias toward basic and acidic residues; it reads HLQEQRNTRETRS. Residues serine 908 and serine 911 each carry the phosphoserine modification. 3 short sequence motifs (nuclear localization signal) span residues 922–938, 1195–1211, and 1275–1291; these read KKAPVLPKSVQNLRKDR, KKTVHLRLPGLMRICKK, and KKLIKGLLIRERLKKKY.

Belongs to the XPC family. In terms of assembly, heterodimer.

It localises to the nucleus. Its function is as follows. Involved in DNA excision repair. May play a part in DNA damage recognition and/or in altering chromatin structure to allow access by damage-processing enzymes. Involved in nucleotide excision repair of DNA damaged with UV light, bulky adducts, or cross-linking agents. The sequence is that of DNA repair protein complementing XP-C cells homolog from Drosophila melanogaster (Fruit fly).